The following is a 1073-amino-acid chain: ATP-dependent helicase/deoxyribonuclease subunit B (1073 aa).

This sequence belongs to the helicase family. AddB/RexB type 2 subfamily. In terms of assembly, heterodimer of AddA and RexB. Requires Mg(2+) as cofactor.

The heterodimer acts as both an ATP-dependent DNA helicase and an ATP-dependent, dual-direction single-stranded exonuclease. Recognizes the chi site generating a DNA molecule suitable for the initiation of homologous recombination. This subunit has 5' -&gt; 3' nuclease activity but not helicase activity. This is ATP-dependent helicase/deoxyribonuclease subunit B from Streptococcus equi subsp. zooepidemicus (strain MGCS10565).